The sequence spans 1019 residues: Clotting factor C (1019 aa).

An N-terminal signal peptide occupies residues Met-1 to Ser-25. Residues Tyr-102 to Glu-137 form the EGF-like domain. 16 disulfide bridges follow: Cys-110–Cys-118, Cys-112–Cys-125, Cys-127–Cys-136, Cys-142–Cys-182, Cys-168–Cys-195, Cys-199–Cys-241, Cys-227–Cys-254, Cys-260–Cys-308, Cys-294–Cys-321, Cys-331–Cys-350, Cys-354–Cys-374, Cys-464–Cys-564, Cys-538–Cys-556, Cys-576–Cys-621, Cys-607–Cys-634, and Cys-720–Cys-748. Sushi domains follow at residues Lys-140–Arg-197, Glu-198–Lys-256, and Val-258–Lys-323. The LCCL domain maps to Ala-325 to Phe-421. The 133-residue stretch at Cys-436–Leu-568 folds into the C-type lectin domain. 2 N-linked (GlcNAc...) asparagine glycosylation sites follow: Asn-523 and Asn-534. 2 consecutive Sushi domains span residues Ala-574–Lys-636 and Pro-689–Pro-750. Asn-624, Asn-740, and Asn-767 each carry an N-linked (GlcNAc...) asparagine glycan. Residues Ile-763 to Ile-1019 enclose the Peptidase S1 domain. A disulfide bridge connects residues Cys-794 and Cys-810. Active-site charge relay system residues include His-809 and Asp-865. An N-linked (GlcNAc...) asparagine glycan is attached at Asn-912. Residues Cys-932 and Cys-951 are joined by a disulfide bond. Asp-960 is a substrate binding site. The cysteines at positions 962 and 996 are disulfide-linked. Ser-966 functions as the Charge relay system in the catalytic mechanism.

Belongs to the peptidase S1 family. Heterodimer of a light chain and a heavy chain linked by a disulfide bond. Forms a covalent heterodimer with intracellular coagulation inhibitor 1/LICI-1. Forms a covalent heterodimer with intracellular coagulation inhibitor 2/LICI-2. Post-translationally, N-glycosylated. Lipopolysaccharide (LPS) activates clotting factor C by inducing the proteolytic cleavage of the clotting factor C light chain into clotting factor C chains A and B. Clotting factor C chains heavy, A and B remain associated via interchain disulfide bonds. As to expression, expressed in hemocytes (at protein level).

The protein resides in the secreted. The catalysed reaction is Selective cleavage of 103-Arg-|-Ser-104 and 124-Ile-|-Ile-125 bonds in Limulus clotting factor B to form activated factor B. Cleavage of -Pro-Arg-|-Xaa- bonds in synthetic substrates.. Activated by Gram-negative bacterial lipopolysaccharides. Inhibited by intracellular coagulation inhibitor 1/LICI-1 and to a lesser extent by intracellular coagulation inhibitors 2/LICI-2 and 3/LICI-3. Inhibited by the small molecule diisopropyl fluorophosphate (DFP). Functionally, this enzyme is closely associated with an endotoxin-sensitive hemolymph coagulation system which may play important roles in both hemostasis and host defense mechanisms. Its active form catalyzes the activation of clotting factor B. The chain is Clotting factor C from Tachypleus tridentatus (Japanese horseshoe crab).